The sequence spans 197 residues: Nucleoid occlusion factor SlmA (197 aa).

One can recognise an HTH tetR-type domain in the interval 7–67 (INRREHILQC…GLIEFIEESL (61 aa)). The H-T-H motif DNA-binding region spans 30-49 (TTAKLASEVGVSEAALYRHF).

It belongs to the nucleoid occlusion factor SlmA family. Homodimer. Interacts with FtsZ.

The protein resides in the cytoplasm. It is found in the nucleoid. Functionally, required for nucleoid occlusion (NO) phenomenon, which prevents Z-ring formation and cell division over the nucleoid. Acts as a DNA-associated cell division inhibitor that binds simultaneously chromosomal DNA and FtsZ, and disrupts the assembly of FtsZ polymers. SlmA-DNA-binding sequences (SBS) are dispersed on non-Ter regions of the chromosome, preventing FtsZ polymerization at these regions. The sequence is that of Nucleoid occlusion factor SlmA from Shewanella oneidensis (strain ATCC 700550 / JCM 31522 / CIP 106686 / LMG 19005 / NCIMB 14063 / MR-1).